Here is a 278-residue protein sequence, read N- to C-terminus: Bis(5'-nucleosyl)-tetraphosphatase, symmetrical (278 aa).

It belongs to the Ap4A hydrolase family.

The catalysed reaction is P(1),P(4)-bis(5'-adenosyl) tetraphosphate + H2O = 2 ADP + 2 H(+). In terms of biological role, hydrolyzes diadenosine 5',5'''-P1,P4-tetraphosphate to yield ADP. The protein is Bis(5'-nucleosyl)-tetraphosphatase, symmetrical of Methylococcus capsulatus (strain ATCC 33009 / NCIMB 11132 / Bath).